Here is a 101-residue protein sequence, read N- to C-terminus: MTTNNLVLSGTITRSRRFKSPAGIAHSVIMLEHKSQRYEADMLRNVYVQIQVILSGPRFESVAEDLKAGVEVQVQGFMTLQQGRNGQNRLVIHAENVELKT.

The 101-residue stretch at 1–101 (MTTNNLVLSG…IHAENVELKT (101 aa)) folds into the SSB domain.

It belongs to the PriB family. As to quaternary structure, homodimer. Interacts with PriA and DnaT. Component of the replication restart primosome. Primosome assembly occurs via a 'hand-off' mechanism. PriA binds to replication forks, subsequently PriB then DnaT bind; DnaT then displaces ssDNA to generate the helicase loading substrate.

In terms of biological role, involved in the restart of stalled replication forks, which reloads the replicative helicase on sites other than the origin of replication; the PriA-PriB pathway is the major replication restart pathway. During primosome assembly it facilitates complex formation between PriA and DnaT on DNA; stabilizes PriA on DNA. Stimulates the DNA unwinding activity of PriA helicase. This chain is Replication restart protein PriB, found in Shewanella baltica (strain OS223).